Reading from the N-terminus, the 147-residue chain is uncharacterized protein (147 aa).

This is an uncharacterized protein from Mycoplasma genitalium (strain ATCC 33530 / DSM 19775 / NCTC 10195 / G37) (Mycoplasmoides genitalium).